Reading from the N-terminus, the 440-residue chain is Serine/threonine-protein kinase 2 (440 aa).

Positions N85–C440 constitute a Protein kinase domain. Residues I91–V99 and K115 contribute to the ATP site. The Proton acceptor role is filled by D306.

This sequence belongs to the protein kinase superfamily. Ser/Thr protein kinase family. Poxviruses subfamily. In terms of processing, phosphorylated in vivo. Autophosphorylated in vitro.

The protein localises to the host endoplasmic reticulum. Its subcellular location is the host endoplasmic reticulum-Golgi intermediate compartment. The catalysed reaction is L-seryl-[protein] + ATP = O-phospho-L-seryl-[protein] + ADP + H(+). It catalyses the reaction L-threonyl-[protein] + ATP = O-phospho-L-threonyl-[protein] + ADP + H(+). In terms of biological role, essential serine-protein kinase involved in the early stage of virion morphogenesis. This chain is Serine/threonine-protein kinase 2 (OPG054), found in Sus scrofa (Pig).